The primary structure comprises 558 residues: S-layer protein (558 aa).

Positions 1–28 (MAMSLKKIGAIAVGGAMVATALASGVAA) are cleaved as a signal peptide. 7 N-linked (GlcNAc...) asparagine glycosylation sites follow: asparagine 112, asparagine 138, asparagine 158, asparagine 197, asparagine 226, asparagine 291, and asparagine 374.

Belongs to the Mj S-layer protein family.

The protein localises to the secreted. It localises to the cell wall. It is found in the S-layer. Its function is as follows. S-layer protein. The S-layer is a paracrystalline mono-layered assembly of proteins which coat the surface of the cell. The polypeptide is S-layer protein (sla) (Methanocaldococcus jannaschii (strain ATCC 43067 / DSM 2661 / JAL-1 / JCM 10045 / NBRC 100440) (Methanococcus jannaschii)).